We begin with the raw amino-acid sequence, 495 residues long: Inner membrane ALBINO3-like protein 1, chloroplastic (495 aa).

Residues 76 to 96 (LGAIYVLADASASTAAAAVMP) traverse the membrane as a helical segment. The Stromal portion of the chain corresponds to 97–206 (TAVDSAAGAA…VLYEQAGVNP (110 aa)). The chain crosses the membrane as a helical span at residues 207–227 (LAGCLPTLATIPIFIGLFSSL). At 228–273 (TNVANDGLLDTQGFYFVPSLAGPTTMAMRQSGLGTSWLWPLGPDGA) the chain is on the lumenal side. Residues 274 to 294 (PPIGWEDAAAYLTLPLLLVAV) traverse the membrane as a helical segment. At 295 to 317 (QYASSSVTSPPIDPKDENANTQR) the chain is on the stromal side. A helical membrane pass occupies residues 318–338 (ALLVFLPLMVGWFSLNVPAGL). Residues 339 to 441 (SLYYLANTVL…ASVSLSVDDS (103 aa)) lie on the Lumenal side of the membrane. A helical transmembrane segment spans residues 442–462 (TAAIAGTATMAVTAGAPAAAM). The Stromal portion of the chain corresponds to 463–495 (DPSKVNRRCKRRRLTSLVQDGSTASAAVAGASA).

This sequence belongs to the OXA1/ALB3/YidC (TC 2.A.9.2) family. As to quaternary structure, associates with the LHCII complex and with the psaE subunit of the LHCI complex.

The protein localises to the plastid. It is found in the chloroplast thylakoid membrane. In terms of biological role, required for the insertion of some light-harvesting complexes (LHC) proteins into the chloroplast thylakoid membrane. Essential for the assembly and activity of LHC I and II. Its function is probably partly distinct from that of ALB3.2. The protein is Inner membrane ALBINO3-like protein 1, chloroplastic (ALB3.1) of Chlamydomonas reinhardtii (Chlamydomonas smithii).